A 476-amino-acid chain; its full sequence is 3-isopropylmalate dehydratase large subunit (476 aa).

Residues C357, C417, and C420 each contribute to the [4Fe-4S] cluster site.

Belongs to the aconitase/IPM isomerase family. LeuC type 1 subfamily. In terms of assembly, heterodimer of LeuC and LeuD. It depends on [4Fe-4S] cluster as a cofactor.

The catalysed reaction is (2R,3S)-3-isopropylmalate = (2S)-2-isopropylmalate. Its pathway is amino-acid biosynthesis; L-leucine biosynthesis; L-leucine from 3-methyl-2-oxobutanoate: step 2/4. Functionally, catalyzes the isomerization between 2-isopropylmalate and 3-isopropylmalate, via the formation of 2-isopropylmaleate. In Mycolicibacterium paratuberculosis (strain ATCC BAA-968 / K-10) (Mycobacterium paratuberculosis), this protein is 3-isopropylmalate dehydratase large subunit.